Consider the following 293-residue polypeptide: MEMTADYLRDRAWQYAQLTRLNRPIGNFLLLWPMLWGLWIAAKGLPDLKVLVVFVLGVLIMRAAGCVINDYADRDFDGHVKRTTHRPMANGRVSEREALTLFVVLCLVAFGLVLLMNPLTIALSLVAVALAATYPFMKRYTHFPQVHLGAAFGWAIPMAFAAQTGAVAPVAWLLFLSAVLWATIYDTQYAMVDRDDDLKIGVKSTAVLFGQADRAIIGVLQGVMLAVLVAAGLVVGLGAFWYLGLAAAAALFAYQQWLIRERRREDCFRAFLNNNWLGGLIFLGLLLDLHLGG.

The next 7 membrane-spanning stretches (helical) occupy residues 25 to 45 (IGNF…AKGL), 48 to 68 (LKVL…GCVI), 101 to 121 (LFVV…PLTI), 142 to 162 (HFPQ…AFAA), 165 to 185 (GAVA…ATIY), 223 to 243 (VMLA…FWYL), and 271 to 291 (FLNN…DLHL).

Belongs to the UbiA prenyltransferase family. The cofactor is Mg(2+).

The protein localises to the cell inner membrane. It catalyses the reaction all-trans-octaprenyl diphosphate + 4-hydroxybenzoate = 4-hydroxy-3-(all-trans-octaprenyl)benzoate + diphosphate. The protein operates within cofactor biosynthesis; ubiquinone biosynthesis. Functionally, catalyzes the prenylation of para-hydroxybenzoate (PHB) with an all-trans polyprenyl group. Mediates the second step in the final reaction sequence of ubiquinone-8 (UQ-8) biosynthesis, which is the condensation of the polyisoprenoid side chain with PHB, generating the first membrane-bound Q intermediate 3-octaprenyl-4-hydroxybenzoate. In Alkalilimnicola ehrlichii (strain ATCC BAA-1101 / DSM 17681 / MLHE-1), this protein is 4-hydroxybenzoate octaprenyltransferase.